The primary structure comprises 522 residues: Protein GDS1 (522 aa).

Disordered stretches follow at residues 56 to 88 (ALDDNNLAGSSFSSSQEIKATKPKKDFGAPKKD), 222 to 268 (QQLE…SSNS), 300 to 391 (LSPS…SHNA), and 433 to 489 (STQT…SRNE). A compositionally biased stretch (polar residues) spans 62 to 73 (LAGSSFSSSQEI). Residues 74 to 88 (KATKPKKDFGAPKKD) are compositionally biased toward basic and acidic residues. Composition is skewed to polar residues over residues 222–236 (QQLETSGDTSDFNSN), 244–260 (SSNQLVNNDSYSSSMTD), 300–314 (LSPSMSNNQQQLLTP), and 355–366 (SQSLSVLSTPKK). Residues 368 to 378 (SSASLSTFASS) are compositionally biased toward low complexity. Polar residues predominate over residues 379 to 391 (KNISPDSSLSHNA). The span at 439 to 467 (ESSSESSQYNSSSSSPVNSAAASSAESLS) shows a compositional bias: low complexity. A compositionally biased stretch (polar residues) spans 468–489 (DINSSQDNGRESNPSSQESRNE).

Functionally, involved in nuclear control of mitochondria. This chain is Protein GDS1 (GDS1), found in Saccharomyces cerevisiae (strain ATCC 204508 / S288c) (Baker's yeast).